The sequence spans 189 residues: uncharacterized protein (189 aa).

This is an uncharacterized protein from Human adenovirus B serotype 7 (HAdV-7).